The chain runs to 129 residues: Fluoride-specific ion channel FluC 2 (129 aa).

4 helical membrane passes run 4 to 24 (LDVMWVCLGGGVGSLGRWWIG), 39 to 59 (TFLINISGAFVIGYLSVLFGV), 65 to 85 (YGTMLNAGVLTGILGGYTTFS), and 104 to 124 (VFYLVASVLSGLFAAWLGAML). G79 and T82 together coordinate Na(+).

It belongs to the fluoride channel Fluc/FEX (TC 1.A.43) family.

It is found in the cell inner membrane. The catalysed reaction is fluoride(in) = fluoride(out). Na(+) is not transported, but it plays an essential structural role and its presence is essential for fluoride channel function. Its function is as follows. Fluoride-specific ion channel. Important for reducing fluoride concentration in the cell, thus reducing its toxicity. The sequence is that of Fluoride-specific ion channel FluC 2 from Brucella abortus biovar 1 (strain 9-941).